A 209-amino-acid polypeptide reads, in one-letter code: dTTP/UTP pyrophosphatase (209 aa).

Asp-79 serves as the catalytic Proton acceptor.

The protein belongs to the Maf family. YhdE subfamily. A divalent metal cation serves as cofactor.

Its subcellular location is the cytoplasm. The catalysed reaction is dTTP + H2O = dTMP + diphosphate + H(+). It catalyses the reaction UTP + H2O = UMP + diphosphate + H(+). Functionally, nucleoside triphosphate pyrophosphatase that hydrolyzes dTTP and UTP. May have a dual role in cell division arrest and in preventing the incorporation of modified nucleotides into cellular nucleic acids. The sequence is that of dTTP/UTP pyrophosphatase from Bradyrhizobium diazoefficiens (strain JCM 10833 / BCRC 13528 / IAM 13628 / NBRC 14792 / USDA 110).